The following is a 387-amino-acid chain: Protein RecA (387 aa).

Gly80–Thr87 contacts ATP. The segment at Leu348–Asp387 is disordered. 2 stretches are compositionally biased toward acidic residues: residues Asp349–Thr360 and Thr378–Asp387.

Belongs to the RecA family.

The protein localises to the cytoplasm. Its function is as follows. Can catalyze the hydrolysis of ATP in the presence of single-stranded DNA, the ATP-dependent uptake of single-stranded DNA by duplex DNA, and the ATP-dependent hybridization of homologous single-stranded DNAs. It interacts with LexA causing its activation and leading to its autocatalytic cleavage. This chain is Protein RecA, found in Lactococcus lactis subsp. cremoris (Streptococcus cremoris).